Reading from the N-terminus, the 378-residue chain is Queuine tRNA-ribosyltransferase (378 aa).

The active-site Proton acceptor is the D89. Substrate contacts are provided by residues 89 to 93, D143, Q187, and G214; that span reads DSGGF. The RNA binding stretch occupies residues 245 to 251; that stretch reads GVGKPED. Catalysis depends on D264, which acts as the Nucleophile. Residues 269–273 are RNA binding; important for wobble base 34 recognition; sequence TRNAR. C302, C304, C307, and H333 together coordinate Zn(2+).

It belongs to the queuine tRNA-ribosyltransferase family. In terms of assembly, homodimer. Within each dimer, one monomer is responsible for RNA recognition and catalysis, while the other monomer binds to the replacement base PreQ1. Requires Zn(2+) as cofactor.

The enzyme catalyses 7-aminomethyl-7-carbaguanine + guanosine(34) in tRNA = 7-aminomethyl-7-carbaguanosine(34) in tRNA + guanine. The protein operates within tRNA modification; tRNA-queuosine biosynthesis. In terms of biological role, catalyzes the base-exchange of a guanine (G) residue with the queuine precursor 7-aminomethyl-7-deazaguanine (PreQ1) at position 34 (anticodon wobble position) in tRNAs with GU(N) anticodons (tRNA-Asp, -Asn, -His and -Tyr). Catalysis occurs through a double-displacement mechanism. The nucleophile active site attacks the C1' of nucleotide 34 to detach the guanine base from the RNA, forming a covalent enzyme-RNA intermediate. The proton acceptor active site deprotonates the incoming PreQ1, allowing a nucleophilic attack on the C1' of the ribose to form the product. After dissociation, two additional enzymatic reactions on the tRNA convert PreQ1 to queuine (Q), resulting in the hypermodified nucleoside queuosine (7-(((4,5-cis-dihydroxy-2-cyclopenten-1-yl)amino)methyl)-7-deazaguanosine). In Yersinia enterocolitica serotype O:8 / biotype 1B (strain NCTC 13174 / 8081), this protein is Queuine tRNA-ribosyltransferase.